The chain runs to 138 residues: Transcription antitermination protein NusB (138 aa).

Belongs to the NusB family.

Involved in transcription antitermination. Required for transcription of ribosomal RNA (rRNA) genes. Binds specifically to the boxA antiterminator sequence of the ribosomal RNA (rrn) operons. This is Transcription antitermination protein NusB from Helicobacter pylori (strain ATCC 700392 / 26695) (Campylobacter pylori).